A 79-amino-acid chain; its full sequence is Ferredoxin (79 aa).

4Fe-4S ferredoxin-type domains are found at residues 2-30 (PHVICEPCIGVKDQSCVEVCPVECIYDGG) and 31-60 (DQFYIHPEECIDCGACVPACPVNAIYPEED). The [3Fe-4S] cluster site is built by C9 and C17. [4Fe-4S] cluster contacts are provided by C21, C40, C43, and C46. C50 is a [3Fe-4S] cluster binding site.

[4Fe-4S] cluster is required as a cofactor. Requires [3Fe-4S] cluster as cofactor.

Ferredoxins are iron-sulfur proteins that transfer electrons in a wide variety of metabolic reactions. The chain is Ferredoxin from Thermus thermophilus (strain ATCC 27634 / DSM 579 / HB8).